A 363-amino-acid polypeptide reads, in one-letter code: NAD(P)H-quinone oxidoreductase subunit 1, chloroplastic (363 aa).

A run of 6 helical transmembrane segments spans residues 28 to 48 (WVFVPILIFIVGITISVLAIV), 98 to 118 (FSFGPAISVISIILSYSVIPF), 129 to 149 (IGVFLWIAISSIAPIGLLMSG), 253 to 273 (FGLFYVASYLNLLVSSLFVTV), 300 to 320 (VFVTIIGIFITLVKTFLFIFV), and 336 to 356 (LLNLGWKFLLPISLGNLLLTT).

The protein belongs to the complex I subunit 1 family. In terms of assembly, NDH is composed of at least 16 different subunits, 5 of which are encoded in the nucleus.

It localises to the plastid. The protein localises to the chloroplast thylakoid membrane. It catalyses the reaction a plastoquinone + NADH + (n+1) H(+)(in) = a plastoquinol + NAD(+) + n H(+)(out). The enzyme catalyses a plastoquinone + NADPH + (n+1) H(+)(in) = a plastoquinol + NADP(+) + n H(+)(out). Its function is as follows. NDH shuttles electrons from NAD(P)H:plastoquinone, via FMN and iron-sulfur (Fe-S) centers, to quinones in the photosynthetic chain and possibly in a chloroplast respiratory chain. The immediate electron acceptor for the enzyme in this species is believed to be plastoquinone. Couples the redox reaction to proton translocation, and thus conserves the redox energy in a proton gradient. The protein is NAD(P)H-quinone oxidoreductase subunit 1, chloroplastic of Phaseolus vulgaris (Kidney bean).